We begin with the raw amino-acid sequence, 327 residues long: Immediate early response gene 5 protein (327 aa).

Disordered regions lie at residues 59 to 166 (GPAG…GVFP) and 227 to 313 (GPAG…DKPV). The segment covering 71-84 (QPGEPAAGPPAGWG) has biased composition (low complexity). Residues 253–262 (GEDDDAEEME) are compositionally biased toward acidic residues. Over residues 265–278 (NVANLISIFGSSFS) the composition is skewed to polar residues.

This sequence belongs to the IER family. As to quaternary structure, monomer. Homodimer. Associates with the catalytic subunit of protein phosphatase PP2A. Interacts (via N- and C-terminal regions) with PPP2R2B. Interacts with PPP2R2A, PPP2R2C and PPP2R2D. Interacts (via N-terminus) with RPS6KB1. Interacts (via central region) with HSF1; this interaction promotes PPP2CA-induced HSF1 dephosphorylation, leading to enhanced HSF1 transcriptional activity. Expressed in acute myeloid leukemia (AML) cells.

Its subcellular location is the nucleus. The protein resides in the cytoplasm. Plays a role as a transcription factor. Mediates positive transcriptional regulation of several chaperone genes during the heat shock response in a HSF1-dependent manner. Mediates negative transcriptional regulation of CDC25B expression. Plays a role in the dephosphorylation of the heat shock factor HSF1 and ribosomal protein S6 kinase (S6K) by the protein phosphatase PP2A. Involved in the regulation of cell proliferation and resistance to thermal stress. Involved in the cell cycle checkpoint and survival in response to ionizing radiation. Associates with chromatin to the CDC25B promoter. The sequence is that of Immediate early response gene 5 protein (IER5) from Homo sapiens (Human).